A 206-amino-acid polypeptide reads, in one-letter code: Ribosomal RNA small subunit methyltransferase G (206 aa).

Residues Gly74, Leu79, 125-126 (VE), and Arg140 each bind S-adenosyl-L-methionine.

Belongs to the methyltransferase superfamily. RNA methyltransferase RsmG family.

It localises to the cytoplasm. The catalysed reaction is guanosine(527) in 16S rRNA + S-adenosyl-L-methionine = N(7)-methylguanosine(527) in 16S rRNA + S-adenosyl-L-homocysteine. Functionally, specifically methylates the N7 position of guanine in position 527 of 16S rRNA. This is Ribosomal RNA small subunit methyltransferase G from Shewanella woodyi (strain ATCC 51908 / MS32).